Consider the following 350-residue polypeptide: N-acetyl-gamma-glutamyl-phosphate reductase (350 aa).

The active site involves Cys-153.

This sequence belongs to the NAGSA dehydrogenase family. Type 1 subfamily.

The protein resides in the cytoplasm. The enzyme catalyses N-acetyl-L-glutamate 5-semialdehyde + phosphate + NADP(+) = N-acetyl-L-glutamyl 5-phosphate + NADPH + H(+). The protein operates within amino-acid biosynthesis; L-arginine biosynthesis; N(2)-acetyl-L-ornithine from L-glutamate: step 3/4. Its function is as follows. Catalyzes the NADPH-dependent reduction of N-acetyl-5-glutamyl phosphate to yield N-acetyl-L-glutamate 5-semialdehyde. The chain is N-acetyl-gamma-glutamyl-phosphate reductase from Thermosynechococcus vestitus (strain NIES-2133 / IAM M-273 / BP-1).